Consider the following 499-residue polypeptide: Leukocyte immunoglobulin-like receptor subfamily A member 4 (499 aa).

Residues 1 to 23 (MTLILTSLLFFGLSLGPRTRVQA) form the signal peptide. 4 consecutive Ig-like C2-type domains span residues 24 to 118 (ENLL…LVVT), 123 to 213 (PTLS…SDPL), 224 to 313 (PSLL…DPLD), and 324 to 413 (PSLS…SEPL). Residues 24–446 (ENLLKPILWA…PHLQDYTVEN (423 aa)) are Extracellular-facing. Residues Cys-49 and Cys-98 are joined by a disulfide bond. An N-linked (GlcNAc...) asparagine glycan is attached at Asn-138. An intrachain disulfide couples Cys-143 to Cys-195. 3 N-linked (GlcNAc...) asparagine glycosylation sites follow: Asn-239, Asn-279, and Asn-300. Cys-244 and Cys-295 are disulfide-bonded. Cys-344 and Cys-395 are oxidised to a cystine. The residue at position 404 (Tyr-404) is a 3'-nitrotyrosine. A helical membrane pass occupies residues 447–467 (LIRMGVAGLVLLFLGILLFEA). The Cytoplasmic portion of the chain corresponds to 468–499 (QHSQRSPPRCSQEANSRKDNAPFRVVEPWEQI).

Interacts with FCER1G; this stabilizes the expression of both proteins at the cell membrane. Interacts with BST2; leads to activation of LILRA4-mediated signaling and down-regulation of the innate immune response to viral pathogens. In terms of tissue distribution, detected on plasmacytoid dendritic cells (at protein level). Detected on plasmacytoid dendritic cells, but not on monocytes or B cells.

Its subcellular location is the cell membrane. Its function is as follows. Functions coreceptor to limit the innate immune responses to viral infections; signaling occurs via FCER1G. Down-regulates the production of IFNA1, IFNA2, IFNA4, IFNB1 and TNF by plasmacytoid dendritic cells that have been exposed to influenza virus or cytidine-phosphate-guanosine (CpG) dinucleotides, indicating it functions as a negative regulator of TLR7 and TLR9 signaling cascades. Down-regulates interferon production in response to interaction with BST2 on HIV-1 infected cells. Activates a signaling cascade in complex with FCER1G that results in phosphorylation of Src family and Syk kinases and thereby triggers mobilization of intracellular Ca(2+). Does not interfere with the differentiation of plasmacytoid dendritic cells into antigen-presenting cells. The sequence is that of Leukocyte immunoglobulin-like receptor subfamily A member 4 from Homo sapiens (Human).